The chain runs to 426 residues: Histidinol dehydrogenase (426 aa).

Positions 126, 188, and 210 each coordinate NAD(+). 3 residues coordinate substrate: serine 233, glutamine 255, and histidine 258. Glutamine 255 and histidine 258 together coordinate Zn(2+). Residues glutamate 323 and histidine 324 each act as proton acceptor in the active site. Substrate is bound by residues histidine 324, aspartate 357, glutamate 411, and histidine 416. A Zn(2+)-binding site is contributed by aspartate 357. Histidine 416 contributes to the Zn(2+) binding site.

This sequence belongs to the histidinol dehydrogenase family. Requires Zn(2+) as cofactor.

The catalysed reaction is L-histidinol + 2 NAD(+) + H2O = L-histidine + 2 NADH + 3 H(+). It participates in amino-acid biosynthesis; L-histidine biosynthesis; L-histidine from 5-phospho-alpha-D-ribose 1-diphosphate: step 9/9. Its function is as follows. Catalyzes the sequential NAD-dependent oxidations of L-histidinol to L-histidinaldehyde and then to L-histidine. This Heliobacterium mobile (Heliobacillus mobilis) protein is Histidinol dehydrogenase.